Here is a 508-residue protein sequence, read N- to C-terminus: Steroid 17-alpha-hydroxylase/17,20 lyase (508 aa).

N202 contributes to the substrate binding site. Residue C442 participates in heme binding.

This sequence belongs to the cytochrome P450 family. It depends on heme as a cofactor. Post-translationally, phosphorylation is necessary for 17,20-lyase, but not for 17-alpha-hydroxylase activity.

The protein resides in the endoplasmic reticulum membrane. It is found in the microsome membrane. It catalyses the reaction a C21-steroid + reduced [NADPH--hemoprotein reductase] + O2 = a 17alpha-hydroxy-C21-steroid + oxidized [NADPH--hemoprotein reductase] + H2O + H(+). The enzyme catalyses progesterone + reduced [NADPH--hemoprotein reductase] + O2 = 17alpha-hydroxyprogesterone + oxidized [NADPH--hemoprotein reductase] + H2O + H(+). It carries out the reaction pregnenolone + reduced [NADPH--hemoprotein reductase] + O2 = 17alpha-hydroxypregnenolone + oxidized [NADPH--hemoprotein reductase] + H2O + H(+). The catalysed reaction is 17alpha-hydroxyprogesterone + reduced [NADPH--hemoprotein reductase] + O2 = androst-4-ene-3,17-dione + acetate + oxidized [NADPH--hemoprotein reductase] + H2O + 2 H(+). It catalyses the reaction 17alpha-hydroxyprogesterone + reduced [NADPH--hemoprotein reductase] + O2 = 16alpha,17alpha-dihydroxyprogesterone + oxidized [NADPH--hemoprotein reductase] + H2O + H(+). The enzyme catalyses 16alpha,17alpha-dihydroxyprogesterone + reduced [NADPH--hemoprotein reductase] + O2 = 6beta,16alpha,17alpha-trihydroxyprogesterone + oxidized [NADPH--hemoprotein reductase] + H2O + H(+). It carries out the reaction 17alpha-hydroxypregnenolone + reduced [NADPH--hemoprotein reductase] + O2 = 3beta-hydroxyandrost-5-en-17-one + acetate + oxidized [NADPH--hemoprotein reductase] + H2O + 2 H(+). The catalysed reaction is 16alpha,17alpha-dihydroxypregnenolone + reduced [NADPH--hemoprotein reductase] + O2 = 3beta,16alpha-dihydroxy-androst-5-en-17-one + acetate + oxidized [NADPH--hemoprotein reductase] + H2O + 2 H(+). It catalyses the reaction 3beta-hydroxyandrost-5-en-17-one + reduced [NADPH--hemoprotein reductase] + O2 = 3beta,16alpha-dihydroxy-androst-5-en-17-one + oxidized [NADPH--hemoprotein reductase] + H2O + H(+). The enzyme catalyses androst-4-ene-3,17-dione + reduced [NADPH--hemoprotein reductase] + O2 = 16alpha-hydroxyandrost-4-ene-3,17-dione + oxidized [NADPH--hemoprotein reductase] + H2O + H(+). It participates in steroid hormone biosynthesis. It functions in the pathway steroid biosynthesis; glucocorticoid biosynthesis. With respect to regulation, regulated predominantly by intracellular cAMP levels. The 17,20-lyase activity is stimulated by cytochrome b5, which acts as an allosteric effector increasing the Vmax of the lyase activity. Its function is as follows. A cytochrome P450 monooxygenase involved in corticoid and androgen biosynthesis. Catalyzes 17-alpha hydroxylation of C21 steroids, which is common for both pathways. A second oxidative step, required only for androgen synthesis, involves an acyl-carbon cleavage. The 17-alpha hydroxy intermediates, as part of adrenal glucocorticoids biosynthesis pathway, are precursors of cortisol. Hydroxylates steroid hormones, pregnenolone and progesterone to form 17-alpha hydroxy metabolites, followed by the cleavage of the C17-C20 bond to form C19 steroids, dehydroepiandrosterone (DHEA) and androstenedione. Has 16-alpha hydroxylase activity. Catalyzes 16-alpha hydroxylation of 17-alpha hydroxy pregnenolone, followed by the cleavage of the C17-C20 bond to form 16-alpha-hydroxy DHEA. Also 16-alpha hydroxylates androgens, relevant for estriol synthesis. Mechanistically, uses molecular oxygen inserting one oxygen atom into a substrate, and reducing the second into a water molecule, with two electrons provided by NADPH via cytochrome P450 reductase (CPR; NADPH-ferrihemoprotein reductase). This chain is Steroid 17-alpha-hydroxylase/17,20 lyase, found in Homo sapiens (Human).